The sequence spans 151 residues: Large ribosomal subunit protein bL9 (151 aa).

Belongs to the bacterial ribosomal protein bL9 family.

Functionally, binds to the 23S rRNA. The sequence is that of Large ribosomal subunit protein bL9 from Carboxydothermus hydrogenoformans (strain ATCC BAA-161 / DSM 6008 / Z-2901).